The chain runs to 336 residues: UDP-3-O-acylglucosamine N-acyltransferase (336 aa).

His-233 functions as the Proton acceptor in the catalytic mechanism.

Belongs to the transferase hexapeptide repeat family. LpxD subfamily. In terms of assembly, homotrimer.

It catalyses the reaction a UDP-3-O-[(3R)-3-hydroxyacyl]-alpha-D-glucosamine + a (3R)-hydroxyacyl-[ACP] = a UDP-2-N,3-O-bis[(3R)-3-hydroxyacyl]-alpha-D-glucosamine + holo-[ACP] + H(+). It participates in bacterial outer membrane biogenesis; LPS lipid A biosynthesis. Functionally, catalyzes the N-acylation of UDP-3-O-acylglucosamine using 3-hydroxyacyl-ACP as the acyl donor. Is involved in the biosynthesis of lipid A, a phosphorylated glycolipid that anchors the lipopolysaccharide to the outer membrane of the cell. This is UDP-3-O-acylglucosamine N-acyltransferase from Helicobacter pylori (strain J99 / ATCC 700824) (Campylobacter pylori J99).